We begin with the raw amino-acid sequence, 89 residues long: Putative ankyrin repeat protein RF_1157 (89 aa).

The ANK repeat unit spans residues 2 to 32 (YNTTPLNFAINQENNEEVIKYLLANGANPRL).

This chain is Putative ankyrin repeat protein RF_1157, found in Rickettsia felis (strain ATCC VR-1525 / URRWXCal2) (Rickettsia azadi).